An 802-amino-acid chain; its full sequence is Exocyst complex component 6 (802 aa).

Belongs to the SEC15 family. As to quaternary structure, the exocyst complex is composed of EXOC1, EXOC2, EXOC3, EXOC4, EXOC5, EXOC6, EXOC7 and EXOC8. Interacts with CNTRL. Interacts with RAB11A in a GTP-dependent manner.

The protein localises to the cytoplasm. It is found in the perinuclear region. Its subcellular location is the cell projection. The protein resides in the growth cone. It localises to the midbody. The protein localises to the midbody ring. Functionally, component of the exocyst complex involved in the docking of exocytic vesicles with fusion sites on the plasma membrane. Together with RAB11A, RAB3IP, RAB8A, PARD3, PRKCI, ANXA2, CDC42 and DNMBP promotes transcytosis of PODXL to the apical membrane initiation sites (AMIS), apical surface formation and lumenogenesis. The polypeptide is Exocyst complex component 6 (Exoc6) (Mus musculus (Mouse)).